The following is a 207-amino-acid chain: Thiamine-phosphate synthase (207 aa).

4-amino-2-methyl-5-(diphosphooxymethyl)pyrimidine contacts are provided by residues Q35–K39 and N67. Residues D68 and D86 each contribute to the Mg(2+) site. A 4-amino-2-methyl-5-(diphosphooxymethyl)pyrimidine-binding site is contributed by T105. Residue S132 to T134 participates in 2-[(2R,5Z)-2-carboxy-4-methylthiazol-5(2H)-ylidene]ethyl phosphate binding. K135 is a binding site for 4-amino-2-methyl-5-(diphosphooxymethyl)pyrimidine. G162 contacts 2-[(2R,5Z)-2-carboxy-4-methylthiazol-5(2H)-ylidene]ethyl phosphate.

It belongs to the thiamine-phosphate synthase family. Mg(2+) serves as cofactor.

It carries out the reaction 2-[(2R,5Z)-2-carboxy-4-methylthiazol-5(2H)-ylidene]ethyl phosphate + 4-amino-2-methyl-5-(diphosphooxymethyl)pyrimidine + 2 H(+) = thiamine phosphate + CO2 + diphosphate. The enzyme catalyses 2-(2-carboxy-4-methylthiazol-5-yl)ethyl phosphate + 4-amino-2-methyl-5-(diphosphooxymethyl)pyrimidine + 2 H(+) = thiamine phosphate + CO2 + diphosphate. It catalyses the reaction 4-methyl-5-(2-phosphooxyethyl)-thiazole + 4-amino-2-methyl-5-(diphosphooxymethyl)pyrimidine + H(+) = thiamine phosphate + diphosphate. Its pathway is cofactor biosynthesis; thiamine diphosphate biosynthesis; thiamine phosphate from 4-amino-2-methyl-5-diphosphomethylpyrimidine and 4-methyl-5-(2-phosphoethyl)-thiazole: step 1/1. Its function is as follows. Condenses 4-methyl-5-(beta-hydroxyethyl)thiazole monophosphate (THZ-P) and 2-methyl-4-amino-5-hydroxymethyl pyrimidine pyrophosphate (HMP-PP) to form thiamine monophosphate (TMP). In Pseudomonas fluorescens (strain Pf0-1), this protein is Thiamine-phosphate synthase.